Consider the following 732-residue polypeptide: E3 ubiquitin-protein ligase DCST1 (732 aa).

Over 1–46 (MAFLSSTLHSLGIFEKISRIKEVLKNRLLDLTKRRDQAREQQRKRP) the chain is Cytoplasmic. The chain crosses the membrane as a helical span at residues 47-67 (HTIIQGLLLWSLPVSWIRFLW). Residues 68-76 (RQPGEFPVT) are Extracellular-facing. A helical membrane pass occupies residues 77-97 (AFLLGAGTGGLLAIGLFQLLV). The Cytoplasmic segment spans residues 98–107 (NPMNIYEEQK). A helical transmembrane segment spans residues 108 to 128 (VVALYCLASLGAIGWGTSPHI). The Extracellular segment spans residues 129–394 (RCASLLLVPK…VRDYVRQQET (266 aa)). N-linked (GlcNAc...) asparagine glycosylation is found at asparagine 184, asparagine 217, asparagine 346, and asparagine 374. A helical transmembrane segment spans residues 395-415 (YLQWAMGLLHVLLSCTFLLVF). Residues 416–489 (HSAFSYMDHY…RYVIRELLET (74 aa)) lie on the Cytoplasmic side of the membrane. A helical membrane pass occupies residues 490–510 (LPIVLLLLVLCAIDWALYSVF). At 511–576 (DTIRQHSFVQ…PQPISLNARD (66 aa)) the chain is on the extracellular side. Asparagine 551 carries N-linked (GlcNAc...) asparagine glycosylation. A helical membrane pass occupies residues 577 to 597 (YFKASLPTLLLVCLCLAQAFG). Over 598 to 732 (YRLRRVIAAF…DSNDDAVYGD (135 aa)) the chain is Cytoplasmic. The RING-type; degenerate zinc-finger motif lies at 672–711 (CVVCQAMETPDSYVCPTPDCKALYCRSCWDDMQRLCPVCT).

As to quaternary structure, interacts with STAT2; the interaction results in STAT2 'Lys-48'-linked ubiquitination leading to its proteasomal degradation. Interacts with DCST2. In terms of tissue distribution, expressed in testis.

The protein resides in the cell membrane. It localises to the cytoplasmic vesicle. It is found in the secretory vesicle. Its subcellular location is the acrosome membrane. It catalyses the reaction S-ubiquitinyl-[E2 ubiquitin-conjugating enzyme]-L-cysteine + [acceptor protein]-L-lysine = [E2 ubiquitin-conjugating enzyme]-L-cysteine + N(6)-ubiquitinyl-[acceptor protein]-L-lysine.. It functions in the pathway protein modification; protein ubiquitination. Its function is as follows. E3 ubiquitin-protein ligase which mediates 'Lys-48'-linked ubiquitination of STAT2 and induces its proteasomal degradation thereby negatively regulating type-I-interferon signaling. In terms of biological role, essential sperm cell-surface protein required for sperm-egg fusion and fertilization. The polypeptide is E3 ubiquitin-protein ligase DCST1 (Dcst1) (Mus musculus (Mouse)).